The sequence spans 471 residues: MDGRQVVRARRWCATAAVALMTASTVAACGSDSGEIVISYYTPANEAATFTAVAQRCNAELGGRFRIEQRSLPREADAQRLQLARRLTGNDRSLDVMALDVVWTAEFAEAGWALPLSEDPAGLAEADATTNTLPGPLETAKWNGELYAAPITTNTQLLWYRADLMDEPPATWDEMLSEAARLHAQGGPSWIAVQGKQYEGLVVWFNTLLESAGGQVLSDDGQRVTLTDTPEHRAATVKALEIIKAVATAPGADPSITQTDENTARLALEQGRAALEVNWPYVLPSLLENAIKGGVGFLPLNENPALRGSINDVGTFAPTDEQFDLALNASKEVFGFARYPGVRPDEPARVTLGGLNLAVASTTRHKAEAFEAVRCLRNEENQRLTSIEGGLPAVRTSLYDDPQFQAKYPQYEIIRDQLINAAVRPATPVYQAMSTRMSATLAPISQIDPERTADELAEQVQQAIDGKGLIP.

A signal peptide spans Met1 to Ala28. A lipid anchor (N-palmitoyl cysteine) is attached at Cys29. A lipid anchor (S-diacylglycerol cysteine) is attached at Cys29. Asn45, Glu46, Gln79, Asp100, Asn154, Tyr198, Trp279, Tyr281, Gly354, and Arg424 together coordinate alpha,alpha-trehalose. The cysteines at positions 57 and 375 are disulfide-linked.

The protein belongs to the bacterial solute-binding protein 1 family. As to quaternary structure, monomer. The complex is composed of two ATP-binding proteins (SugC), two transmembrane proteins (SugA and SugB) and a solute-binding protein (LpqY).

The protein resides in the cell inner membrane. In terms of biological role, part of the ABC transporter complex LpqY-SugA-SugB-SugC, which is highly specific for uptake of trehalose. Involved in the recycling of extracellular trehalose released from trehalose-containing molecules synthesized by M.thermoresistibile. Trehalose uptake is essential for virulence. Binds deuterated trehalose with similar high affinity to trehalose, trehalose analogs including galactotrehalose, 4-azido-4-deoxy-trehalose, 6-azido-6-deoxy-trehalose, 3-azido-3-deoxy-trehalose and mannotrehalose in the order of decreasing affinity, respectively, and 2-azido-2-deoxy-trehalose and kojibiose (alpha1,2-glycosidic bond) with very low affinity. Does not recognize single glucose, 6-amino-6-deoxy-trehalose, trehalose-6-phosphate, nigerose (alpha1,3-glycosidic bond), maltose (alpha1,4-glycosidic bond), isomaltose (alpha1,6-glycosidic bond) or glycerophosphocholine. Decreased recognition of alpha,beta-trehalose and almost no recognition of beta,beta-trehalose. Substrate specificity indicates a strict requirement for an alpha1,1-linked disaccharide. In Mycolicibacterium thermoresistibile (strain ATCC 19527 / DSM 44167 / CIP 105390 / JCM 6362 / NCTC 10409 / 316) (Mycobacterium thermoresistibile), this protein is Trehalose-binding lipoprotein LpqY.